Here is a 165-residue protein sequence, read N- to C-terminus: Chorismate pyruvate-lyase (165 aa).

Substrate is bound by residues methionine 35, arginine 77, leucine 115, and glutamate 156.

The protein belongs to the UbiC family. In terms of assembly, monomer.

It is found in the cytoplasm. The catalysed reaction is chorismate = 4-hydroxybenzoate + pyruvate. It functions in the pathway cofactor biosynthesis; ubiquinone biosynthesis. Its function is as follows. Removes the pyruvyl group from chorismate, with concomitant aromatization of the ring, to provide 4-hydroxybenzoate (4HB) for the ubiquinone pathway. The chain is Chorismate pyruvate-lyase from Salmonella schwarzengrund (strain CVM19633).